The chain runs to 80 residues: MMKPLRQQNRQIISYIPRVEPAPPEHAIKMDTFRDVWILRGKYVAFVLTRESFQRSPAFSVPESAQRWANQVRQENEIAD.

The protein belongs to the CedA family.

Activates the cell division inhibited by chromosomal DNA over-replication. The protein is Cell division activator CedA of Salmonella typhimurium (strain LT2 / SGSC1412 / ATCC 700720).